Reading from the N-terminus, the 1224-residue chain is Tyrosine-protein kinase abl-1 (1224 aa).

Residues 115 to 188 (SSAPLFVALY…PSNFIAPYNS (74 aa)) enclose the SH3 domain. The SH2 domain occupies 194–284 (WYHGKISRSD…GLICLLMYPA (91 aa)). Positions 311–562 (IIMHNKLGGG…PRFRDIHFNL (252 aa)) constitute a Protein kinase domain. ATP is bound by residues 317–325 (LGGGQYGDV), K340, and 385–391 (EFMCNGN). Residue D432 is the Proton acceptor of the active site. The short motif at 450-474 (DFGLARFMKEDTYTAHAGAKFPIKW) is the Kinase activation loop element. Residues 579–620 (LKKNNDKKLESDKRRSNVRERSDSKSRHSSHHDRDRDRESLH) show a composition bias toward basic and acidic residues. Disordered stretches follow at residues 579-671 (LKKN…NTKP), 736-775 (KEST…STYV), 796-881 (KRSE…DVGM), 914-937 (LRHV…ATDN), and 968-1016 (RPFS…RSNG). 2 stretches are compositionally biased toward polar residues: residues 639-655 (SVSF…TSFR) and 746-760 (AGSS…NDSL). Composition is skewed to basic and acidic residues over residues 797–819 (RSET…KSEK) and 864–877 (PDSK…ETTK). Residues 973–984 (QCPNNSTSSAIS) are compositionally biased toward polar residues. The span at 1001 to 1016 (YEERMKPELPRKRSNG) shows a compositional bias: basic and acidic residues.

Belongs to the protein kinase superfamily. Tyr protein kinase family. ABL subfamily. As to quaternary structure, interacts (via SH2 and SH3 domains) with mig-13; the interaction is direct. May interact with soem-1.

The protein localises to the cell membrane. It localises to the cytoplasm. The enzyme catalyses L-tyrosyl-[protein] + ATP = O-phospho-L-tyrosyl-[protein] + ADP + H(+). Functionally, functions downstream of migratory protein mig-13 and is involved in Q neuroblast migration during larval development. Recruited by mig-13 to the leading edge of Q neuroblasts and their descendents to signal downstream, likely to the wve-1 pathway, and direct migration along the anteroposterior body axis. Promotes germline cell apoptosis in response to oxidative, osmotic and heat shock stresses. The protein is Tyrosine-protein kinase abl-1 (abl-1) of Caenorhabditis elegans.